Reading from the N-terminus, the 361-residue chain is tRNA-specific 2-thiouridylase MnmA (361 aa).

ATP contacts are provided by residues 8–15 (GMSGGVDS) and Met-34. The segment at 94-96 (NPD) is interaction with target base in tRNA. Residue Cys-99 is the Nucleophile of the active site. An intrachain disulfide couples Cys-99 to Cys-195. Gly-123 is an ATP binding site. An interaction with tRNA region spans residues 145-147 (KDQ). Catalysis depends on Cys-195, which acts as the Cysteine persulfide intermediate. Residues 307 to 308 (RY) form an interaction with tRNA region.

It belongs to the MnmA/TRMU family.

The protein localises to the cytoplasm. The catalysed reaction is S-sulfanyl-L-cysteinyl-[protein] + uridine(34) in tRNA + AH2 + ATP = 2-thiouridine(34) in tRNA + L-cysteinyl-[protein] + A + AMP + diphosphate + H(+). Catalyzes the 2-thiolation of uridine at the wobble position (U34) of tRNA, leading to the formation of s(2)U34. The protein is tRNA-specific 2-thiouridylase MnmA of Legionella pneumophila (strain Paris).